The following is a 485-amino-acid chain: Glutamyl-tRNA(Gln) amidotransferase subunit A (485 aa).

Active-site charge relay system residues include lysine 78 and serine 153. Serine 177 acts as the Acyl-ester intermediate in catalysis.

This sequence belongs to the amidase family. GatA subfamily. In terms of assembly, heterotrimer of A, B and C subunits.

The catalysed reaction is L-glutamyl-tRNA(Gln) + L-glutamine + ATP + H2O = L-glutaminyl-tRNA(Gln) + L-glutamate + ADP + phosphate + H(+). Allows the formation of correctly charged Gln-tRNA(Gln) through the transamidation of misacylated Glu-tRNA(Gln) in organisms which lack glutaminyl-tRNA synthetase. The reaction takes place in the presence of glutamine and ATP through an activated gamma-phospho-Glu-tRNA(Gln). The protein is Glutamyl-tRNA(Gln) amidotransferase subunit A of Geobacter metallireducens (strain ATCC 53774 / DSM 7210 / GS-15).